Consider the following 122-residue polypeptide: HetP-like commitment protein Alr3234 (122 aa).

Belongs to the HetP family. As to quaternary structure, in bacterial two-hybrid assays interacts robustly with itself, Asl1930, Alr2902 and HetR and weakly with HetP.

Its function is as follows. Delays heterocyst differentiation and commitment when nitrogen is limiting. Interplay between the 4 HetP paralogs controls the timing of commitment to heterocyst formation and its duration. Epistatic analysis show that the 3 paralogs act upstream of hetP to delay commitment (asl1930, alr3234) or inhibit development (alr2902). Asl1930 and Alr3234 must also attenuate the activity of Alr2902. Ectopic expression does not complement a hetP deletion. In Nostoc sp. (strain PCC 7120 / SAG 25.82 / UTEX 2576), this protein is HetP-like commitment protein Alr3234.